The chain runs to 696 residues: Spermatogenesis-associated protein 21 (696 aa).

Disordered stretches follow at residues 1–301 and 329–386; these read MDNR…AAGT and LKAR…SVPT. Basic and acidic residues predominate over residues 67-86; the sequence is KGPRYRDTFKEGPSELRTQE. The segment covering 96 to 116 has biased composition (polar residues); sequence KQSSWVPQEGSQELQAGQDQS. A compositionally biased stretch (basic and acidic residues) spans 195–209; it reads GDKRPKEADVPHIRP. Over residues 223-235 the composition is skewed to polar residues; sequence DSSQEAMPPTSTV. Residues 275–287 show a composition bias toward basic and acidic residues; the sequence is EVRDIGERREPDR. Low complexity-rich tracts occupy residues 288–297 and 339–366; these read VQQQPQKPVV and SPRT…SGPS. The stretch at 424–451 forms a coiled coil; the sequence is EPEEQSLQKLYQNREKSEEQLTLKQEEA. The 36-residue stretch at 481 to 516 folds into the EF-hand domain; the sequence is VTPAQVEDALMSADVNGDGHVDFKDFLAVMTDTRRF. 5 residues coordinate Ca(2+): D494, N496, D498, H500, and D505. The tract at residues 646-696 is disordered; the sequence is KPTNHYVQDQCTTPGLAPDIRSPFFQSRSQGNREHNSDSRKWPSSVPSRTH. The span at 676 to 686 shows a compositional bias: basic and acidic residues; that stretch reads GNREHNSDSRK.

Involved in the differentiation of haploid spermatids. The chain is Spermatogenesis-associated protein 21 (SPATA21) from Macaca fascicularis (Crab-eating macaque).